Consider the following 231-residue polypeptide: Orotidine 5'-phosphate decarboxylase (231 aa).

Residues Asp11, Lys32, 59 to 68, Thr118, Arg180, Gln189, Gly209, and Arg210 each bind substrate; that span reads DLKFHDIPNT. The active-site Proton donor is the Lys61.

The protein belongs to the OMP decarboxylase family. Type 1 subfamily. Homodimer.

It carries out the reaction orotidine 5'-phosphate + H(+) = UMP + CO2. It functions in the pathway pyrimidine metabolism; UMP biosynthesis via de novo pathway; UMP from orotate: step 2/2. Catalyzes the decarboxylation of orotidine 5'-monophosphate (OMP) to uridine 5'-monophosphate (UMP). The protein is Orotidine 5'-phosphate decarboxylase of Synechocystis sp. (strain ATCC 27184 / PCC 6803 / Kazusa).